The sequence spans 168 residues: Desumoylating isopeptidase 1 (168 aa).

Residues Y7 to D149 enclose the PPPDE domain. H38 is a catalytic residue. The Nuclear export signal 1 motif lies at I83–L91. C108 is a catalytic residue. The Nuclear export signal 2 motif lies at P139–I153.

It belongs to the DeSI family. Homodimer. Interacts with UBQLN4; leading to the export of UBQLN4 from the nucleus.

Its subcellular location is the cytoplasm. It is found in the nucleus. The enzyme catalyses S-hexadecanoyl-L-cysteinyl-[protein] + H2O = L-cysteinyl-[protein] + hexadecanoate + H(+). Palmostatin B inhibits its palmitoyl protein thioesterase activity. In terms of biological role, protease which deconjugates SUMO1, SUMO2 and SUMO3 from some substrate proteins. Has isopeptidase but not SUMO-processing activity. Desumoylates ZBTB46. Collaborates with UBQLN4 in the export of ubiquitinated proteins from the nucleus to the cytoplasm. Exhibits palmitoyl protein thioesterase (S-depalmitoylation) activity towards synthetic substrates 4-methylumbelliferyl-6-S-palmitoyl-beta-D-glucopyranoside and S-depalmitoylation probe 5 (DPP-5). The protein is Desumoylating isopeptidase 1 of Homo sapiens (Human).